The sequence spans 157 residues: UPF0127 protein TK1120 (157 aa).

It belongs to the UPF0127 family.

The chain is UPF0127 protein TK1120 from Thermococcus kodakarensis (strain ATCC BAA-918 / JCM 12380 / KOD1) (Pyrococcus kodakaraensis (strain KOD1)).